We begin with the raw amino-acid sequence, 682 residues long: Potassium-transporting ATPase ATP-binding subunit (682 aa).

The next 4 membrane-spanning stretches (helical) occupy residues 34–54 (PVMF…IAMA), 62–82 (ALFS…ANFA), 219–239 (IALT…TATL), and 254–274 (VLVA…LSAI). The active-site 4-aspartylphosphate intermediate is Asp-307. ATP-binding positions include Asp-344, Glu-348, 377-384 (FTAQSRMS), and Lys-395. Mg(2+) contacts are provided by Asp-518 and Asp-522. Transmembrane regions (helical) follow at residues 588–608 (FAII…LNIM), 616–636 (AILS…PLAL), and 656–676 (IYGL…DLLL).

The protein belongs to the cation transport ATPase (P-type) (TC 3.A.3) family. Type IA subfamily. The system is composed of three essential subunits: KdpA, KdpB and KdpC.

It is found in the cell inner membrane. The enzyme catalyses K(+)(out) + ATP + H2O = K(+)(in) + ADP + phosphate + H(+). Part of the high-affinity ATP-driven potassium transport (or Kdp) system, which catalyzes the hydrolysis of ATP coupled with the electrogenic transport of potassium into the cytoplasm. This subunit is responsible for energy coupling to the transport system and for the release of the potassium ions to the cytoplasm. The sequence is that of Potassium-transporting ATPase ATP-binding subunit from Escherichia coli O6:K15:H31 (strain 536 / UPEC).